The chain runs to 901 residues: HTH-type transcriptional regulator MalT (901 aa).

39-46 (SPAGYGKT) serves as a coordination point for ATP. Residues 829-894 (ELIRTSPLTQ…DAVQHAQQLL (66 aa)) enclose the HTH luxR-type domain. Positions 853 to 872 (NEQIAGELDVAATTIKTHIR) form a DNA-binding region, H-T-H motif.

This sequence belongs to the MalT family. As to quaternary structure, monomer in solution. Oligomerizes to an active state in the presence of the positive effectors ATP and maltotriose.

Its activity is regulated as follows. Activated by ATP and maltotriose, which are both required for DNA binding. Positively regulates the transcription of the maltose regulon whose gene products are responsible for uptake and catabolism of malto-oligosaccharides. Specifically binds to the promoter region of its target genes, recognizing a short DNA motif called the MalT box. This chain is HTH-type transcriptional regulator MalT, found in Klebsiella pneumoniae subsp. pneumoniae (strain ATCC 700721 / MGH 78578).